The primary structure comprises 297 residues: 4-diphosphocytidyl-2-C-methyl-D-erythritol kinase (297 aa).

Catalysis depends on residues K6 and D144.

This sequence belongs to the GHMP kinase family. IspE subfamily.

It carries out the reaction 4-CDP-2-C-methyl-D-erythritol + ATP = 4-CDP-2-C-methyl-D-erythritol 2-phosphate + ADP + H(+). Its pathway is isoprenoid biosynthesis; isopentenyl diphosphate biosynthesis via DXP pathway; isopentenyl diphosphate from 1-deoxy-D-xylulose 5-phosphate: step 3/6. Functionally, catalyzes the phosphorylation of the position 2 hydroxy group of 4-diphosphocytidyl-2C-methyl-D-erythritol. This Leptospira interrogans serogroup Icterohaemorrhagiae serovar copenhageni (strain Fiocruz L1-130) protein is 4-diphosphocytidyl-2-C-methyl-D-erythritol kinase.